The chain runs to 516 residues: 3-phosphoshikimate 1-carboxyvinyltransferase, chloroplastic (516 aa).

Residues 1–72 (MAQINNMAQG…RISASVATAQ (72 aa)) constitute a chloroplast transit peptide. 3-phosphoshikimate is bound by residues K95, S96, and R100. K95 is a binding site for phosphoenolpyruvate. Residues G173 and R203 each coordinate phosphoenolpyruvate. Residues S250, S251, Q252, S278, D403, and K430 each contribute to the 3-phosphoshikimate site. Residue Q252 coordinates phosphoenolpyruvate. D403 (proton acceptor) is an active-site residue. Residues R434, R476, and K501 each coordinate phosphoenolpyruvate.

This sequence belongs to the EPSP synthase family. As to expression, mostly expressed in flower petals, and, to a lower extent, in roots, stems and anthers, but barely in leaves.

It is found in the plastid. Its subcellular location is the chloroplast. It carries out the reaction 3-phosphoshikimate + phosphoenolpyruvate = 5-O-(1-carboxyvinyl)-3-phosphoshikimate + phosphate. Its pathway is metabolic intermediate biosynthesis; chorismate biosynthesis; chorismate from D-erythrose 4-phosphate and phosphoenolpyruvate: step 6/7. Competitively inhibited by glyphosate. Functionally, catalyzes the transfer of the enolpyruvyl moiety of phosphoenolpyruvate (PEP) to the 5-hydroxyl of shikimate-3-phosphate (S3P) to produce enolpyruvyl shikimate-3-phosphate and inorganic phosphate. Involved in the accumulation of volatile benzoides in flowers, scent attracting pollinators (e.g. the night-active hawkmoth pollinator Manduca sexta). The polypeptide is 3-phosphoshikimate 1-carboxyvinyltransferase, chloroplastic (Petunia hybrida (Petunia)).